A 31-amino-acid polypeptide reads, in one-letter code: Mu-conotoxin SmIIIA (31 aa).

A propeptide spanning residues 1 to 6 (PLFDKR) is cleaved from the precursor. A Pyrrolidone carboxylic acid modification is found at Gln-7. Intrachain disulfides connect Cys-9-Cys-21, Cys-10-Cys-27, and Cys-16-Cys-28. A Cysteine amide modification is found at Cys-28.

The protein belongs to the conotoxin M superfamily. Post-translationally, smIIIA' is a putative isoform where the N-terminal AA is missing. In terms of tissue distribution, expressed by the venom duct.

The protein resides in the secreted. Its function is as follows. Mu-conotoxins block voltage-gated sodium channels (Nav). This toxin blocks rNav1.5/SCN5A (IC(50) is 1.3 uM), rNav1.6/SCN8A (IC(50) is 160 nM), rNav1.7/SCN9A (IC(50) is 1.3 uM), rNav1.1/SCN1A (K(d) is 3.8 nM), rNav1.2/SCN2A (K(d) is 1.3 nM), rNav1.4/SCN4A (K(d) is 0.22 nM), rNav1.6/SCN8A (K(d) is 69 nM), and rNav1.7/SCN9A (K(d) is 260 nM). This toxin is very potent but weakly discriminating among sodium channels. The block of these channels is modified when beta-subunits are coexpressed with alpha subunits. Hence, blocks of channels containing beta-1 and beta-3 subunits are more potent (compared to channels without beta subunits), whereas blocks of channels containing beta-2 and beta-4 subunits are less potent (compared to channels without beta subunits). The sequence is that of Mu-conotoxin SmIIIA from Conus stercusmuscarum (Fly-specked cone).